The primary structure comprises 785 residues: DNA ligase (785 aa).

Residues 32 to 36 (DAEYD), 81 to 82 (SL), and Glu-121 contribute to the NAD(+) site. Lys-123 serves as the catalytic N6-AMP-lysine intermediate. Residues Arg-144, Glu-181, Lys-297, and Lys-321 each contribute to the NAD(+) site. 4 residues coordinate Zn(2+): Cys-415, Cys-418, Cys-445, and Cys-451. In terms of domain architecture, BRCT spans 702-785 (VEGLPLAGET…AFLKGHGISA (84 aa)).

This sequence belongs to the NAD-dependent DNA ligase family. LigA subfamily. Requires Mg(2+) as cofactor. It depends on Mn(2+) as a cofactor.

The enzyme catalyses NAD(+) + (deoxyribonucleotide)n-3'-hydroxyl + 5'-phospho-(deoxyribonucleotide)m = (deoxyribonucleotide)n+m + AMP + beta-nicotinamide D-nucleotide.. DNA ligase that catalyzes the formation of phosphodiester linkages between 5'-phosphoryl and 3'-hydroxyl groups in double-stranded DNA using NAD as a coenzyme and as the energy source for the reaction. It is essential for DNA replication and repair of damaged DNA. The protein is DNA ligase of Pseudomonas fluorescens (strain Pf0-1).